The sequence spans 533 residues: Zinc finger protein 26 (533 aa).

The region spanning 14 to 85 (LSFKDISMEF…NAKISRQSCP (72 aa)) is the KRAB domain. 13 consecutive C2H2-type zinc fingers follow at residues 174 to 196 (CVCS…LRIH), 202 to 224 (YECS…QRVH), 230 to 252 (YSCS…QEIH), 258 to 280 (YGCS…QRSH), 286 to 308 (YECS…QRTH), 314 to 336 (HKCS…IRMH), 342 to 364 (YQCS…QGVH), 370 to 392 (YQCG…LRAH), 398 to 420 (YGCS…RRTH), 426 to 448 (YECS…QRTH), 454 to 476 (YECN…QKTH), 482 to 504 (FKCS…QRVH), and 510 to 532 (WKCS…RKTH).

This sequence belongs to the krueppel C2H2-type zinc-finger protein family.

The protein resides in the nucleus. Its function is as follows. May be involved in transcriptional regulation. The protein is Zinc finger protein 26 (ZNF26) of Homo sapiens (Human).